Here is a 272-residue protein sequence, read N- to C-terminus: Shikimate dehydrogenase (NADP(+)) (272 aa).

Shikimate-binding positions include 14-16 (SKS) and Thr61. Lys65 functions as the Proton acceptor in the catalytic mechanism. Glu77 is an NADP(+) binding site. The shikimate site is built by Asn86 and Asp102. NADP(+) contacts are provided by residues 126–130 (GAGGA), 150–155 (NRTFSK), and Met213. Shikimate is bound at residue Tyr215. Residue Gly237 coordinates NADP(+).

It belongs to the shikimate dehydrogenase family. In terms of assembly, homodimer.

It carries out the reaction shikimate + NADP(+) = 3-dehydroshikimate + NADPH + H(+). It participates in metabolic intermediate biosynthesis; chorismate biosynthesis; chorismate from D-erythrose 4-phosphate and phosphoenolpyruvate: step 4/7. Functionally, involved in the biosynthesis of the chorismate, which leads to the biosynthesis of aromatic amino acids. Catalyzes the reversible NADPH linked reduction of 3-dehydroshikimate (DHSA) to yield shikimate (SA). The protein is Shikimate dehydrogenase (NADP(+)) of Psychromonas ingrahamii (strain DSM 17664 / CCUG 51855 / 37).